Reading from the N-terminus, the 132-residue chain is Peptide methionine sulfoxide reductase MsrB (132 aa).

The MsrB domain occupies 8–130 (LDSWREELTE…NSASLKLVPR (123 aa)). Zn(2+) contacts are provided by Cys47, Cys50, Cys96, and Cys99. Cys119 (nucleophile) is an active-site residue.

The protein belongs to the MsrB Met sulfoxide reductase family. It depends on Zn(2+) as a cofactor.

It carries out the reaction L-methionyl-[protein] + [thioredoxin]-disulfide + H2O = L-methionyl-(R)-S-oxide-[protein] + [thioredoxin]-dithiol. This chain is Peptide methionine sulfoxide reductase MsrB, found in Pseudomonas aeruginosa (strain UCBPP-PA14).